The primary structure comprises 188 residues: GTP cyclohydrolase 1 (188 aa).

Zn(2+) is bound by residues C75, H78, and C146.

The protein belongs to the GTP cyclohydrolase I family. In terms of assembly, toroid-shaped homodecamer, composed of two pentamers of five dimers.

The catalysed reaction is GTP + H2O = 7,8-dihydroneopterin 3'-triphosphate + formate + H(+). It functions in the pathway cofactor biosynthesis; 7,8-dihydroneopterin triphosphate biosynthesis; 7,8-dihydroneopterin triphosphate from GTP: step 1/1. This chain is GTP cyclohydrolase 1, found in Hahella chejuensis (strain KCTC 2396).